The chain runs to 311 residues: MYVSYLLDKDVSMYPSSVRHSGGLNLAPQNFVSPPQYPDYGGYHVAAAAAATANLDSAQSPGPSWPTAYGAPLREDWNGYAPGGAAAANAVAHGLNGGSPAAAMGYSSPAEYHAHHHPHHHPHHPAASPSCASGLLQTLNLGPPGPAATAAAEQLSPSGQRRNLCEWMRKPAQQSLGSQVKTRTKDKYRVVYTDHQRLELEKEFHFSRYITIRRKSELAATLGLSERQVKIWFQNRRAKERKIKKKQQQQQQQQQQQPPQPPPQPSQPQPGALRSVPEPLSPVTSLQGSVPGSVPGVLGPAGGVLNSTVTQ.

Position 60 is a phosphoserine (Ser-60). Residues 111 to 151 form a disordered region; that stretch reads EYHAHHHPHHHPHHPAASPSCASGLLQTLNLGPPGPAATAA. Positions 114–124 are enriched in basic residues; it reads AHHHPHHHPHH. The interval 185–215 is interaction with DNA; that stretch reads KDKYRVVYTDHQRLELEKEFHFSRYITIRRK. Positions 185-244 form a DNA-binding region, homeobox; sequence KDKYRVVYTDHQRLELEKEFHFSRYITIRRKSELAATLGLSERQVKIWFQNRRAKERKIK. Residues 227–241 form an interaction with 5-mCpG DNA region; sequence RQVKIWFQNRRAKER. The interval 239-311 is disordered; that stretch reads KERKIKKKQQ…GGVLNSTVTQ (73 aa). A compositionally biased stretch (low complexity) spans 248 to 257; the sequence is QQQQQQQQQQ. Residues 258–268 show a composition bias toward pro residues; that stretch reads PPQPPPQPSQP. Ser-281 carries the post-translational modification Phosphoserine; by CDK2. The 4S motif; modulates transactivation activity and protein stability signature appears at 281-293; the sequence is SPVTSLQGSVPGS. The span at 285–298 shows a compositional bias: low complexity; sequence SLQGSVPGSVPGVL.

This sequence belongs to the Caudal homeobox family. In terms of assembly, can bind DNA as a monomer or homodimer. Ubiquitinated, leading to its degradation by the proteasome. In terms of processing, phosphorylation at Ser-60 reduces transactivation capacity. Phosphorylation at Ser-281 reduces transactivation capacity and increases ubiquitin-dependent proteasome degradation. As to expression, in the intestine, detected in ileum and proximal and distal colon (at protein level). In adult small intestine, predominantly localized in crypt and lower villus cells of the epithelium (at protein level). Expressed in the intestine but not detected in other tissues including stomach, liver, kidney, spleen, brain, heart, lung, pancreas, skeletal muscle and testis. Expressed specifically in gut epithelium where it is not restricted to a particular cell lineage. Abundant expression is seen in the proximal colon with slightly lower levels in distal colon. Expression in the proximal colon is not restricted either to a particular cell lineage or stage of differentiation while in the distal colon it is more abundant in the differentiated cells towards the top of the crypt.

It is found in the nucleus. Its function is as follows. Transcription factor which regulates the transcription of multiple genes expressed in the intestinal epithelium. Binds to the promoter of the intestinal sucrase-isomaltase SI and activates SI transcription. Binds to the DNA sequence 5'-ATAAAAACTTAT-3' in the promoter region of VDR and activates VDR transcription. Binds to and activates transcription of LPH. Activates transcription of CLDN2 and intestinal mucin MUC2. Binds to the 5'-AATTTTTTACAACACCT-3' DNA sequence in the promoter region of CA1 and activates CA1 transcription. Important in broad range of functions from early differentiation to maintenance of the intestinal epithelial lining of both the small and large intestine. Binds preferentially to methylated DNA. In Mus musculus (Mouse), this protein is Homeobox protein CDX-2 (Cdx2).